A 631-amino-acid chain; its full sequence is tRNA uridine 5-carboxymethylaminomethyl modification enzyme MnmG (631 aa).

FAD-binding positions include 13 to 18, Val125, and Ser180; that span reads GGGHAG. 273–287 serves as a coordination point for NAD(+); the sequence is GPRYCPSIEDKVMRF. Gln370 provides a ligand contact to FAD.

It belongs to the MnmG family. Homodimer. Heterotetramer of two MnmE and two MnmG subunits. FAD is required as a cofactor.

Its subcellular location is the cytoplasm. NAD-binding protein involved in the addition of a carboxymethylaminomethyl (cmnm) group at the wobble position (U34) of certain tRNAs, forming tRNA-cmnm(5)s(2)U34. This is tRNA uridine 5-carboxymethylaminomethyl modification enzyme MnmG from Vibrio atlanticus (strain LGP32) (Vibrio splendidus (strain Mel32)).